A 431-amino-acid polypeptide reads, in one-letter code: Trigger factor (431 aa).

One can recognise a PPIase FKBP-type domain in the interval 165–250 (GDTVVIDFDG…IHELKRKELP (86 aa)).

Belongs to the FKBP-type PPIase family. Tig subfamily.

Its subcellular location is the cytoplasm. The catalysed reaction is [protein]-peptidylproline (omega=180) = [protein]-peptidylproline (omega=0). Involved in protein export. Acts as a chaperone by maintaining the newly synthesized protein in an open conformation. Functions as a peptidyl-prolyl cis-trans isomerase. This is Trigger factor from Leuconostoc citreum (strain KM20).